We begin with the raw amino-acid sequence, 797 residues long: MKQEQQPTPGARATQSQPADQELGSNSPPQRNWKGIAIALLVILVVCSLITMSVILLTPDELTNSSETRLSLEELLGKGFGLHNPEPRWINDTVVVYKTNNGHVMKLNTESNASTLLLDNSTFVTFKASRHSLSPDLKYVLLAYDVKQIFHYSFTASYLIYNIHTGEVWELNPPEVEDSVLQYAAWGVQGQQLIYIFENNIYYQPDIKSSSLRLTSSGKEGIIFNGIADWLYEEELLHSHIAHWWSPDGERLAFLMINDSLVPNMIIPRFTGALYPKAKQYPYPKAGQANPSVKLYVVNLYGPTHTLELMPPDIFKSREYYITMVKWVSNTRTVVRWLNRPQNISILTLCESTTGACSRKYEMTSDTWLSKQNEEPVFSRDGSKFFMTVPVKQGGRGEFHHIAMFLVQSKSEQITVRHLTSGNWEVIRILAYDETTQKIYFLSTESSPQGRQLYSASTEGLLNRDCISCNFMKEDCTYFDASFSPMNQHFLLFCEGPKVPVVSLHITDNPSRYFLLENNSVMKETIQKKKLAKRETRILHIDDYELPLQLSFPKDFMEKNQYALLLIMDEEPGGQMVTDKFHVDWDSVLIDTDNVIVARFDGRGSGFQGLKVLQEIHRRIGSVEAKDQVAAVKYLLKQPYIDSKRLSIFGKGYGGYIASMILKSDEKFFKCGAVVAPISDMKLYASAFSERYLGMPSKEESTYQASSVLHNIHGLKEENLLIIHGTADTKVHFQHSAELIKHLIKAGVNYTLQVYPDEGYHISDKSKHHFYSTILRFFSDCLKEEVSVLPQEPEEDE.

The interval Met-1–Pro-28 is disordered. The Cytoplasmic portion of the chain corresponds to Met-1–Lys-34. A helical; Signal-anchor for type II membrane protein transmembrane segment spans residues Gly-35–Ile-55. Topologically, residues Leu-56 to Glu-797 are extracellular. N-linked (GlcNAc...) asparagine glycans are attached at residues Asn-64, Asn-91, Asn-112, and Asn-120. 2 positions are modified to phosphotyrosine: Tyr-139 and Tyr-144. 4 N-linked (GlcNAc...) asparagine glycosylation sites follow: Asn-258, Asn-343, Asn-518, and Asn-749.

Belongs to the peptidase S9B family. DPPIV subfamily. As to quaternary structure, may form oligomers. Interacts with KCND1 and KCND2. Post-translationally, N-glycosylation is important for cell surface expression, specially at Asn-258, which is crucial. As to expression, detected in brain cortex (at protein level). Expressed in the brain, predominantly by neurons and not by glia.

Its subcellular location is the cell membrane. Functionally, promotes cell surface expression of the potassium channel KCND2. Modulates the activity and gating characteristics of the potassium channel KCND2. Has no dipeptidyl aminopeptidase activity. This Mus musculus (Mouse) protein is Inactive dipeptidyl peptidase 10 (Dpp10).